The sequence spans 293 residues: TBC1 domain family member 7 (293 aa).

Residues 50–231 enclose the Rab-GAP TBC domain; sequence PLPSMYRALV…RVWDKVVSGS (182 aa).

In terms of assembly, component of the TSC-TBC complex (also named Rhebulator complex), composed of 2 molecules of TSC1, 2 molecules of TSC2 and 1 molecule of TBC1D7. Interacts with TSC1 (via C-terminal half of the coiled-coil domain). Highly expressed in heart, and slightly in kidney, liver and placenta.

The protein resides in the lysosome membrane. It localises to the cytoplasmic vesicle. Its subcellular location is the cytoplasm. The protein localises to the cytosol. Its function is as follows. Non-catalytic component of the TSC-TBC complex, a multiprotein complex that acts as a negative regulator of the canonical mTORC1 complex, an evolutionarily conserved central nutrient sensor that stimulates anabolic reactions and macromolecule biosynthesis to promote cellular biomass generation and growth. The TSC-TBC complex acts as a GTPase-activating protein (GAP) for the small GTPase RHEB, a direct activator of the protein kinase activity of mTORC1. In absence of nutrients, the TSC-TBC complex inhibits mTORC1, thereby preventing phosphorylation of ribosomal protein S6 kinase (RPS6KB1 and RPS6KB2) and EIF4EBP1 (4E-BP1) by the mTORC1 signaling. The TSC-TBC complex is inactivated in response to nutrients, relieving inhibition of mTORC1. In Homo sapiens (Human), this protein is TBC1 domain family member 7.